A 904-amino-acid polypeptide reads, in one-letter code: MEWGSESAAVRRHRVGVERREGAAAAPPPEREARAQEPLVDGCSGGGRTRKRSPGGSGGASRGAGTGLSEVRAALGLALYLIALRTLVQLSLQQLVLRGAAGHRGEFDALQARDYLEHITSIGPRTTGSPENEILTVHYLLEQIKLIEVQSNSLHKISVDVQRPTGSFSIDFLGGFTSYYDNITNVVVKLEPRDGAQHAVLANCHFDSVANSPGASDDAVSCSVMLEVLRVLSTSSEALHHAVIFLFNGAEENVLQASHGFITQHPWASLIRAFINLEAAGVGGKELVFQTGPENPWLVQAYVSAAKHPFASVVAQEVFQSGIIPSDTDFRIYRDFGNIPGIDLAFIENGYIYHTKYDTADRILTDSIQRAGDNILAVLKHLATSDMLAAASKYRHGNMVFFDVLGLFVIAYPSRIGSIINYMVVMGVVLYLGKKFLQPKHKTGNYKKDFLCGLGITLISWFTSLVTVLIIAVFISLIGQSLSWYNHFYVSVCLYGTATVAKIILIHTLAKRFYYMNASAQYLGEVFFDISLFVHCCFLVTLTYQGLCSAFISAVWVAFPLLTKLCVHKDFKQHGAQGKFIAFYLLGMFIPYLYALYLIWAVFEMFTPILGRSGSEIPPDVVLASILAGCTMILSSYFINFIYLAKSTKKTMLTLTLVCAITFLLVCSGTFFPYSSNPANPKPKRVFLQHMTRTFHDLEGNAVKRDSGIWINGFDYTGISHITPHIPEINDSIRAHCEENAPLCGFPWYLPVHFLIRKNWYLPAPEVSPRNPPHFRLISKEQTPWDSIKLTFEATGPSHMSFYVRAHKGSTLSQWSLGNGTPVTSKGGDYFVFYSHGLQASAWQFWIEVQVSEEHPEGMVTVAIAAHYLSGEDKRSPQLDALKEKFPDWTFPSAWVCTYDLFVF.

M1 carries the post-translational modification N-acetylmethionine. At M1–G63 the chain is on the cytoplasmic side. The segment at M1–G65 is disordered. Residues G55–G65 show a composition bias toward gly residues. A helical transmembrane segment spans residues A64 to L84. At R85–M399 the chain is on the lumenal side. The N-linked (GlcNAc...) asparagine glycan is linked to N182. A disulfide bridge links C204 with C222. Positions 205 and 217 each coordinate Zn(2+). Catalysis depends on E251, which acts as the Proton acceptor. Zn(2+) is bound by residues E252, E278, and H354. Residues V400–I420 traverse the membrane as a helical segment. The Cytoplasmic segment spans residues N421–T457. Residues L458–I478 form a helical membrane-spanning segment. The Lumenal segment spans residues G479–Y489. Residues V490 to A510 traverse the membrane as a helical segment. Residues K511–S519 are Cytoplasmic-facing. A helical transmembrane segment spans residues A520 to V540. Position 541 (T541) is a topological domain, lumenal. Residues L542–L562 traverse the membrane as a helical segment. Over T563–K579 the chain is Cytoplasmic. Residues F580 to W600 traverse the membrane as a helical segment. The Lumenal portion of the chain corresponds to A601–V621. A helical transmembrane segment spans residues V622–I642. The Cytoplasmic segment spans residues Y643–T651. Residues M652–F672 traverse the membrane as a helical segment. At P673–F904 the chain is on the lumenal side. A glycan (N-linked (GlcNAc...) asparagine) is linked at N730.

It belongs to the peptidase M28 family. Zn(2+) serves as cofactor.

It localises to the endoplasmic reticulum membrane. Functionally, within the ovary, required for the organization of somatic cells and oocytes into discrete follicular structures. This chain is Endoplasmic reticulum metallopeptidase 1, found in Homo sapiens (Human).